Consider the following 241-residue polypeptide: Small ribosomal subunit protein uS3c (241 aa).

The protein belongs to the universal ribosomal protein uS3 family. Part of the 30S ribosomal subunit.

It localises to the plastid. This is Small ribosomal subunit protein uS3c (rps3) from Helicosporidium sp. subsp. Simulium jonesii (Green alga).